A 182-amino-acid polypeptide reads, in one-letter code: Glycerol-3-phosphate acyltransferase 1 (182 aa).

Helical transmembrane passes span 5 to 25 (MQFL…AYIV), 54 to 74 (GYFI…VAVA), 81 to 101 (PTFV…PVLF), 117 to 137 (IAFD…FYLI), and 157 to 177 (ILYS…VLIL).

This sequence belongs to the PlsY family. As to quaternary structure, probably interacts with PlsX.

The protein localises to the cell membrane. It carries out the reaction an acyl phosphate + sn-glycerol 3-phosphate = a 1-acyl-sn-glycero-3-phosphate + phosphate. It functions in the pathway lipid metabolism; phospholipid metabolism. In terms of biological role, catalyzes the transfer of an acyl group from acyl-phosphate (acyl-PO(4)) to glycerol-3-phosphate (G3P) to form lysophosphatidic acid (LPA). This enzyme utilizes acyl-phosphate as fatty acyl donor, but not acyl-CoA or acyl-ACP. This is Glycerol-3-phosphate acyltransferase 1 from Bacillus cereus (strain ATCC 14579 / DSM 31 / CCUG 7414 / JCM 2152 / NBRC 15305 / NCIMB 9373 / NCTC 2599 / NRRL B-3711).